The following is an 825-amino-acid chain: Probable phosphoketolase (825 aa).

This sequence belongs to the XFP family. Thiamine diphosphate serves as cofactor.

The polypeptide is Probable phosphoketolase (Bifidobacterium animalis subsp. lactis (strain AD011)).